The primary structure comprises 944 residues: Valine--tRNA ligase (944 aa).

A 'HIGH' region motif is present at residues 43-53; sequence PNVTGTLHMGH. A 'KMSKS' region motif is present at residues 550–554; that stretch reads KMSKS. Lysine 553 provides a ligand contact to ATP. The stretch at 878-944 forms a coiled coil; sequence LVDMDAERTR…TGLREQRAKL (67 aa).

It belongs to the class-I aminoacyl-tRNA synthetase family. ValS type 1 subfamily. As to quaternary structure, monomer.

It is found in the cytoplasm. The catalysed reaction is tRNA(Val) + L-valine + ATP = L-valyl-tRNA(Val) + AMP + diphosphate. Its function is as follows. Catalyzes the attachment of valine to tRNA(Val). As ValRS can inadvertently accommodate and process structurally similar amino acids such as threonine, to avoid such errors, it has a 'posttransfer' editing activity that hydrolyzes mischarged Thr-tRNA(Val) in a tRNA-dependent manner. The polypeptide is Valine--tRNA ligase (Xanthomonas campestris pv. campestris (strain 8004)).